Consider the following 169-residue polypeptide: Regulator of sigma D (169 aa).

It belongs to the Rsd/AlgQ family. In terms of assembly, interacts with RpoD.

Its subcellular location is the cytoplasm. Its function is as follows. Binds RpoD and negatively regulates RpoD-mediated transcription activation by preventing the interaction between the primary sigma factor RpoD with the catalytic core of the RNA polymerase and with promoter DNA. May be involved in replacement of the RNA polymerase sigma subunit from RpoD to RpoS during the transition from exponential growth to the stationary phase. The protein is Regulator of sigma D of Yersinia pestis.